Consider the following 879-residue polypeptide: MTQEYSTLRNNISMLGRFLGETINDAQGEDILELIENIRKLSRNSRAGDDKARQALLDTLGSISNENIIPVARAFSQFLNLTNIAEQYQTISREHSLAQSSSQSLSELFKRLKEQNASVEEVHKTVEKLLIELVLTAHPTETTRRSLIHKHIEINKCLSKLEHHDLTEKERNIIERLLLRLIAEAWHTNEIRTVRPTPFDEAKWGFAMLENSLWQAVPEFLRQLNETAREFLGYDLSVGLKPVRISSWMGGDRDGNPFVTAQITKKVLYFARWKAADLFLQDISKLADELSMMKCSDEFRDKYGEHLEPYRFVVKNLRNQLTATLAYFDDHLSNRTPRVSESEIILEDNQLWEPLYDCYQSLIQCGMRIIANGSLLNILHRISCFGVTLSQMDIRQESTRHTDAIAEITRYIGLGDYSQWMEDDKQAFLIRELSSRRPLIPQNWTPSPETKEILDTCKVIAQQKQGVIACYVISMARSASDVLAVHLLLKESGVPYHIPVVPLFETLEDLDAAEKVMTQLFNVGWYRGVINNRQMVMIGYSDSAKDAGMMAASWAQYRAQEALVNLTEKLGIELTLFHGRGGTIGRGGAPAHAALLSQPPRSLKNGLRVTEQGEMIRFKLGLPAVAVETFDLYASAILEANLLPPPEPKPEWRTIMDELSTISCDIYRGVVRGDKDFVPYFRSATPEQELSKLPLGSRPAKRNPNGGVESLRAIPWIFAWMQNRLMLPAWLGAGAAIRQVIEQGKGDIIHKMCENWPFFSTRIGMLEMVFSKSDTWLSQQYDQRLVKKELWYLGENLRKQLEDDIQTVLSLSHQSELMSDLPWIADSIALRNIYTDPLNLLQVELLHRFRENPEQVNPDVEQALMITITGIAAGMRNTG.

Active-site residues include histidine 138 and lysine 545.

Belongs to the PEPCase type 1 family. Mg(2+) serves as cofactor.

It catalyses the reaction oxaloacetate + phosphate = phosphoenolpyruvate + hydrogencarbonate. Its function is as follows. Forms oxaloacetate, a four-carbon dicarboxylic acid source for the tricarboxylic acid cycle. The protein is Phosphoenolpyruvate carboxylase (ppc) of Haemophilus influenzae (strain ATCC 51907 / DSM 11121 / KW20 / Rd).